The chain runs to 489 residues: FK506-binding protein 4 (489 aa).

2 disordered regions span residues 40–157 (PDET…GLEL) and 199–378 (GNYV…TTGT). The span at 66-88 (MDIDESDDDYEEDSEEDSDDEEI) shows a compositional bias: acidic residues. The segment covering 93 to 109 (SDKEKARKLKEAAALKE) has biased composition (basic and acidic residues). Composition is skewed to acidic residues over residues 110–125 (LEDE…DDEN), 143–157 (TDDD…GLEL), and 208–250 (GPSE…DELD). Basic and acidic residues-rich tracts occupy residues 267 to 282 (APKL…RTAD), 292 to 303 (MMAKDGKAKGAD), and 328 to 353 (EQKK…EAKK). The segment covering 362 to 378 (QGPTPSGQKPGETTTGT) has biased composition (polar residues). One can recognise a PPIase FKBP-type domain in the interval 406–489 (VAMRYIGKLE…IFDVKLLEIK (84 aa)).

Belongs to the FKBP-type PPIase family. FKBP3/4 subfamily. In terms of assembly, binds to histones H3 and H4.

The protein localises to the nucleus. The catalysed reaction is [protein]-peptidylproline (omega=180) = [protein]-peptidylproline (omega=0). With respect to regulation, inhibited by both FK506 and rapamycin. PPIase that acts as a histone chaperone. Histone proline isomerase that increases the rate of cis-trans isomerization at prolines on the histone H3 N-terminal tail. Proline isomerization influences H3 methylation thereby regulating gene expression. This chain is FK506-binding protein 4 (fpr4), found in Aspergillus fumigatus (strain ATCC MYA-4609 / CBS 101355 / FGSC A1100 / Af293) (Neosartorya fumigata).